A 640-amino-acid chain; its full sequence is Paramyosin, short form (640 aa).

Nonhelical region stretches follow at residues 1–122 (MALA…PDTV) and 420–640 (KLEQ…TITE). A coiled-coil region spans residues 123-619 (VERSRQRRRR…IIRAKHRTFV (497 aa)).

The protein belongs to the paramyosin family. Phosphorylated. In terms of tissue distribution, found in all adult muscle tissues except in indirect flight muscles and a set of temporary abdominal muscles. Not detected in larval muscle.

It is found in the cytoplasm. It localises to the myofibril. In terms of biological role, paramyosin is a major structural component of many thick filaments isolated from invertebrate muscles. The sequence is that of Paramyosin, short form (Prm) from Drosophila melanogaster (Fruit fly).